We begin with the raw amino-acid sequence, 330 residues long: Phospholipase C (330 aa).

The N-terminal stretch at 1–34 (MVKKTKSNSLKKVATLALANLLLVGALTDNSAKA) is a signal peptide. A disulfide bond links C155 and C191.

The protein belongs to the neutral sphingomyelinase family. Monomer.

Its subcellular location is the secreted. The catalysed reaction is a 1,2-diacyl-sn-glycero-3-phosphocholine + H2O = phosphocholine + a 1,2-diacyl-sn-glycerol + H(+). Bacterial hemolysins are exotoxins that attack blood cell membranes and cause cell rupture. Beta-hemolysin is a phospholipase C with specific activity toward sphingomyelins. Has a high specificity for sphingomyelin, hydrolyzes lysophosphatidylcholine at a much lower rate, but has no activity towards phosphatidylcholine, phosphatidylethanolamine, or phosphatidylserine. The polypeptide is Phospholipase C (hlb) (Staphylococcus aureus (strain NCTC 8325 / PS 47)).